The sequence spans 385 residues: 1-deoxy-D-xylulose 5-phosphate reductoisomerase (385 aa).

NADPH-binding residues include serine 10, glycine 11, serine 12, isoleucine 13, glycine 36, asparagine 38, and asparagine 124. Lysine 125 provides a ligand contact to 1-deoxy-D-xylulose 5-phosphate. Glutamate 126 lines the NADPH pocket. Aspartate 150 provides a ligand contact to Mn(2+). Positions 151, 152, 176, and 198 each coordinate 1-deoxy-D-xylulose 5-phosphate. Mn(2+) is bound at residue glutamate 152. Glycine 204 provides a ligand contact to NADPH. 1-deoxy-D-xylulose 5-phosphate is bound by residues serine 211, asparagine 216, lysine 217, and glutamate 220. Residue glutamate 220 participates in Mn(2+) binding.

The protein belongs to the DXR family. Requires Mg(2+) as cofactor. It depends on Mn(2+) as a cofactor.

It carries out the reaction 2-C-methyl-D-erythritol 4-phosphate + NADP(+) = 1-deoxy-D-xylulose 5-phosphate + NADPH + H(+). It functions in the pathway isoprenoid biosynthesis; isopentenyl diphosphate biosynthesis via DXP pathway; isopentenyl diphosphate from 1-deoxy-D-xylulose 5-phosphate: step 1/6. Catalyzes the NADPH-dependent rearrangement and reduction of 1-deoxy-D-xylulose-5-phosphate (DXP) to 2-C-methyl-D-erythritol 4-phosphate (MEP). This Endomicrobium trichonymphae protein is 1-deoxy-D-xylulose 5-phosphate reductoisomerase.